The primary structure comprises 596 residues: NADH-quinone oxidoreductase subunit C/D (596 aa).

Residues 1-186 (MTDLTAQDAA…DPFELTKAKQ (186 aa)) form an NADH dehydrogenase I subunit C region. Residues 210–596 (DFMFLNLGPN…IDFVMSDVDR (387 aa)) form an NADH dehydrogenase I subunit D region.

It in the N-terminal section; belongs to the complex I 30 kDa subunit family. This sequence in the C-terminal section; belongs to the complex I 49 kDa subunit family. NDH-1 is composed of 13 different subunits. Subunits NuoB, CD, E, F, and G constitute the peripheral sector of the complex.

The protein localises to the cell inner membrane. It catalyses the reaction a quinone + NADH + 5 H(+)(in) = a quinol + NAD(+) + 4 H(+)(out). Functionally, NDH-1 shuttles electrons from NADH, via FMN and iron-sulfur (Fe-S) centers, to quinones in the respiratory chain. The immediate electron acceptor for the enzyme in this species is believed to be ubiquinone. Couples the redox reaction to proton translocation (for every two electrons transferred, four hydrogen ions are translocated across the cytoplasmic membrane), and thus conserves the redox energy in a proton gradient. The chain is NADH-quinone oxidoreductase subunit C/D from Salmonella choleraesuis (strain SC-B67).